The primary structure comprises 148 residues: Hemoglobin subunit beta-A (148 aa).

Positions 3–148 (DWTDAERAAI…VVSALGRQYH (146 aa)) constitute a Globin domain. Residues histidine 64 and histidine 93 each coordinate heme b.

It belongs to the globin family. Heterotetramer of two alpha chains and two beta chains. As to expression, red blood cells.

Functionally, involved in oxygen transport from gills to the various peripheral tissues. The polypeptide is Hemoglobin subunit beta-A (hbb1) (Seriola quinqueradiata (Five-ray yellowtail)).